Here is a 1164-residue protein sequence, read N- to C-terminus: MREEGGGSREKEGESPNPPSLTQSRQPASSWGWGEGSGEVRPPHAPSGWGARAQRSRDPGMPPRPPPRQAGGGLSREFGKLLPALSHSPLGGLGSGSGSVAPGQGRAGAMGSRTPGSPLHAVQLRRGARRRPRLLPLLPPLLLLLLPPPPRVGGFNLDAEAPAVLSGPPGSFFGFSVEFYRPGTDGVSVLVGAPKANTSQPGVLQGGAVYLCPWGTSPAQCTPIEFDSKGSRIFESSTSSSEGEEPVEYKSLQWFGATVRAHGSSILACAPLYSWRTEKEPQSDPVGTCYLSTGNFTQILEYAPCRSDFSQEAGQGYCQGGFSAEFTKTGRVVLGGPGSYFWQGQILSATQEQIAESYYPGYLINPVRGQLQTRQASSIYDDSYLGYSVAVGEFSGDDREDFVAGVPKGNLTYGYVTILNGSDIRSLYNFSGEQMASYFGYAVAATDINGDGLDDLLVGAPLLMERTADGRPQEVGRVYIYLQRLAGMEPTPTLTLTGQDEFGRFGSSLTPLGDLDQDGYNDVAIGAAFGGENRQGVVFIFPGGPGGLASKPSQVLLPLWAAGHTPDFFGSALRGGRDLDGNGYPDLIVGSFGVDKAVVYRGRPIVSASASLTIFPAMFNPEEHSCSLEGNPVTCINLSFCLNASGKHVPDSIGFTVELQLDWQKQKGGVRRALFLASRQATLTQTLLIQNGAREDCREMKIYLRNESEFRDKLSPIHIALNFSLDPQAPVDSHGLRPVLHYQSKSRIEDKAQILLDCGEDNICVPDLQLEVFGEQNHVYLGDKNSLNLTFHAQNVGEGGAYEAELRVTAPPEAEYSGLVRHPGNFSSLSCDYFAVNQSRLLVCDLGNPMKAGASLWGGLRFTVPHLRDTKKTIQFDFQILSKNLNNSQSDVVSFRLSVEAQAQVSLNGVSKPEAVLFPMSDWHPQDQPQEEGDVGPAVHHVYELINLGPSSISQGVLELSCPHALDGQQLLYVTRVTGLSNCTTSHPPNPEGLELDPEGSQHHRLQRRDVPGRSPASSGPQILKCPEAECFKLRCELGPLHRQESRSLQLHFRVWAKTFLQREHQPFSLQCEAVYEALKMPYKILPRQLPQKALQVATAVQWIKAEGSHGVPLWIIILAILIGLLLLGLLIYILYKLGFFKRSLPYGTAMEKAQLKPPATSDA.

Residues Met-1–Glu-14 are compositionally biased toward basic and acidic residues. A disordered region spans residues Met-1–Leu-119. The segment covering Leu-81–Leu-90 has biased composition (low complexity). One copy of the FG-GAP 1 repeat lies at Asn-156–Cys-221. Residue Asn-197 is glycosylated (N-linked (GlcNAc...) asparagine). An intrachain disulfide couples Cys-212 to Cys-221. Ser-240 is modified (phosphoserine). FG-GAP repeat units lie at residues Ser-241 to Glu-301, Arg-306 to Tyr-358, Gln-372 to Ile-424, Arg-425 to Pro-490, Thr-491 to Ser-550, and Gln-554 to Ala-617. Residues Cys-269 and Cys-289 are joined by a disulfide bond. The N-linked (GlcNAc...) asparagine glycan is linked to Asn-295. Cys-305 and Cys-318 are oxidised to a cystine. The a protein site is built by Gln-375 and Asp-382. Residues Glu-393, Ser-395, Asp-397, and Asp-401 each coordinate Ca(2+). N-linked (GlcNAc...) asparagine glycosylation is found at Asn-410, Asn-420, and Asn-429. Ca(2+) contacts are provided by Asp-447, Asn-449, Asp-451, Leu-453, Asp-455, Asp-514, Asp-516, Asp-518, Tyr-520, Asp-522, Asp-578, Asp-580, Asn-582, Tyr-584, and Asp-586. Cys-626 and Cys-635 are oxidised to a cystine. N-linked (GlcNAc...) asparagine glycans are attached at residues Asn-637, Asn-643, Asn-706, and Asn-722. Cysteines 641 and 697 form a disulfide. The cysteines at positions 758 and 764 are disulfide-linked. N-linked (GlcNAc...) asparagine glycans are attached at residues Asn-788, Asn-825, Asn-837, Asn-886, and Asn-982. A disulfide bridge connects residues Cys-831 and Cys-844. 3 disulfide bridges follow: Cys-962-Cys-1072, Cys-983-Cys-1036, and Cys-1026-Cys-1031. A disordered region spans residues Cys-983–Gln-1022. Residues Leu-1114–Ile-1134 traverse the membrane as a helical segment. Topologically, residues Leu-1135–Ala-1164 are cytoplasmic. Residues Tyr-1136 to Arg-1143 are interaction with HPS5. The short motif at Gly-1139–Arg-1143 is the GFFKR motif element.

The protein belongs to the integrin alpha chain family. In terms of assembly, heterodimer of an alpha and a beta subunit. The alpha subunit is composed of a heavy and a light chain linked by a disulfide bond. Alpha-5 associates with beta-1. Interacts with NISCH. Interacts with HPS5. Interacts with RAB21 and COMP. Interacts with CIB1. ITGA5:ITGB1 interacts with CCN3. ITGA5:ITGB1 interacts with FBN1. ITGA5:ITGB1 interacts with IL1B. ITGA5:ITGB1 interacts with ACE2. ITGA5:ITGB1 interacts with SELP. Interacts with ANGPT2. ITGA5:ITGB1 interacts with IGFBP2. ITGA5:ITGB1 interacts with IGFBP1. Proteolytic cleavage by PCSK5 mediates activation of the precursor.

It is found in the cell membrane. Its subcellular location is the cell junction. The protein localises to the focal adhesion. Functionally, integrin alpha-5/beta-1 (ITGA5:ITGB1) is a receptor for fibronectin and fibrinogen. It recognizes the sequence R-G-D in its ligands. ITGA5:ITGB1 binds to PLA2G2A via a site (site 2) which is distinct from the classical ligand-binding site (site 1) and this induces integrin conformational changes and enhanced ligand binding to site 1. ITGA5:ITGB1 acts as a receptor for fibrillin-1 (FBN1) and mediates R-G-D-dependent cell adhesion to FBN1. ITGA5:ITGB1 acts as a receptor for fibronectin (FN1) and mediates R-G-D-dependent cell adhesion to FN1. ITGA5:ITGB1 is a receptor for IL1B and binding is essential for IL1B signaling. ITGA5:ITGB3 is a receptor for soluble CD40LG and is required for CD40/CD40LG signaling. The protein is Integrin alpha-5 (ITGA5) of Bos taurus (Bovine).